Reading from the N-terminus, the 529-residue chain is Bifunctional purine biosynthesis protein PurH (529 aa).

An MGS-like domain is found at 1-148 (MNNARPIRRA…KNHKDVVIVV (148 aa)).

This sequence belongs to the PurH family.

The catalysed reaction is (6R)-10-formyltetrahydrofolate + 5-amino-1-(5-phospho-beta-D-ribosyl)imidazole-4-carboxamide = 5-formamido-1-(5-phospho-D-ribosyl)imidazole-4-carboxamide + (6S)-5,6,7,8-tetrahydrofolate. It carries out the reaction IMP + H2O = 5-formamido-1-(5-phospho-D-ribosyl)imidazole-4-carboxamide. Its pathway is purine metabolism; IMP biosynthesis via de novo pathway; 5-formamido-1-(5-phospho-D-ribosyl)imidazole-4-carboxamide from 5-amino-1-(5-phospho-D-ribosyl)imidazole-4-carboxamide (10-formyl THF route): step 1/1. The protein operates within purine metabolism; IMP biosynthesis via de novo pathway; IMP from 5-formamido-1-(5-phospho-D-ribosyl)imidazole-4-carboxamide: step 1/1. The polypeptide is Bifunctional purine biosynthesis protein PurH (Shewanella amazonensis (strain ATCC BAA-1098 / SB2B)).